We begin with the raw amino-acid sequence, 481 residues long: Long chain base biosynthesis protein 1b (481 aa).

The chain crosses the membrane as a helical span at residues 32–52 (FGIHIDGHLVVEGLLIAAILF).

Belongs to the class-II pyridoxal-phosphate-dependent aminotransferase family. In terms of assembly, heterodimer with LCB2. Component of the serine palmitoyltransferase (SPT) complex, composed of LCB1 and LCB2. The cofactor is pyridoxal 5'-phosphate.

The protein resides in the endoplasmic reticulum membrane. It carries out the reaction L-serine + hexadecanoyl-CoA + H(+) = 3-oxosphinganine + CO2 + CoA. It functions in the pathway lipid metabolism; sphingolipid metabolism. In terms of biological role, serine palmitoyltransferase (SPT). The heterodimer formed with LCB2 constitutes the catalytic core. The chain is Long chain base biosynthesis protein 1b from Oryza sativa subsp. japonica (Rice).